Reading from the N-terminus, the 379-residue chain is Deoxyguanosinetriphosphate triphosphohydrolase-like protein (379 aa).

The region spanning 69–200 (RLTHTIEVAQ…ANLADEIAYS (132 aa)) is the HD domain.

It belongs to the dGTPase family. Type 2 subfamily.

The polypeptide is Deoxyguanosinetriphosphate triphosphohydrolase-like protein (Azoarcus sp. (strain BH72)).